A 396-amino-acid polypeptide reads, in one-letter code: Putative ribosomal RNA large subunit methyltransferase YwbD (396 aa).

Positions 1 to 79 (MKLLTLKKAH…KHEQIDQAFF (79 aa)) constitute a PUA domain.

The protein belongs to the methyltransferase superfamily. RlmI family.

The protein resides in the cytoplasm. The chain is Putative ribosomal RNA large subunit methyltransferase YwbD (ywbD) from Bacillus subtilis (strain 168).